A 584-amino-acid polypeptide reads, in one-letter code: MFS-type transporter gkaD (584 aa).

Low complexity predominate over residues 1–11; sequence MAVDTETTTTT. The tract at residues 1-60 is disordered; the sequence is MAVDTETTTTTIPVTDSDRIDDQNNLTSNAIPHASEKTVPDSPASEQNEVSDESEDKPSK. N-linked (GlcNAc...) asparagine glycosylation is present at N25. The next 8 membrane-spanning stretches (helical) occupy residues 65 to 85, 99 to 119, 134 to 154, 167 to 187, 196 to 216, 223 to 243, 262 to 282, and 293 to 313; these read FGFY…SLEA, LGGA…QTAF, WPMI…GGSK, GIGS…LLPL, MIVS…GLIV, WVFY…FFFL, WIGN…LSWA, and VVVP…YEGS. N-linked (GlcNAc...) asparagine glycosylation occurs at N328. Transmembrane regions (helical) follow at residues 334 to 354, 369 to 389, 398 to 418, 425 to 445, 462 to 482, and 536 to 556; these read AFAV…FLPV, VQLL…GTLL, LQHG…LLDA, WVGY…VLLP, TWSF…TAVF, and LNVV…LVFL.

This sequence belongs to the major facilitator superfamily.

The protein resides in the membrane. In terms of biological role, MFS-type transporter; part of the gene cluster that mediates the biosynthesis of GKK1032, fungal natural products containing a macrocyclic para-cyclophane connected to a decahydrofluorene ring system that show potent antitumor activities. The protein is MFS-type transporter gkaD of Penicillium citrinum.